The primary structure comprises 390 residues: tRNA (guanine(9)-N1)-methyltransferase (390 aa).

The tract at residues 1–72 (MDIDEESYLN…RTAQLAEGYA (72 aa)) is disordered. A compositionally biased stretch (basic and acidic residues) spans 43–59 (ARLEEIKPLKRAAERER). The SAM-dependent MTase TRM10-type domain maps to 92–340 (KERKEAQRRI…AVIPIRKYAP (249 aa)). Residues 246–247 (LS), glycine 266, 270–274 (DRNRH), cysteine 278, leucine 292, and 305–307 (KVL) each bind S-adenosyl-L-methionine. Residue aspartate 270 is the Proton acceptor of the active site. Residues 343–390 (KTKRAKTETKRNEKEEEEVECTSAEGEEDIGVIEESAEVDPEDVFSNQ) form a disordered region. Residues 347–356 (AKTETKRNEK) are compositionally biased toward basic and acidic residues. Positions 357–390 (EEEEVECTSAEGEEDIGVIEESAEVDPEDVFSNQ) are enriched in acidic residues.

It belongs to the class IV-like SAM-binding methyltransferase superfamily. TRM10 family. As to quaternary structure, monomer.

Its subcellular location is the cytoplasm. The protein localises to the nucleus. The enzyme catalyses guanosine(9) in tRNA + S-adenosyl-L-methionine = N(1)-methylguanosine(9) in tRNA + S-adenosyl-L-homocysteine + H(+). Functionally, S-adenosyl-L-methionine-dependent guanine N(1)-methyltransferase that catalyzes the formation of N(1)-methylguanine at position 9 (m1G9) in cytoplasmic tRNA. This is tRNA (guanine(9)-N1)-methyltransferase from Cryptococcus neoformans var. neoformans serotype D (strain JEC21 / ATCC MYA-565) (Filobasidiella neoformans).